Consider the following 359-residue polypeptide: Peptide chain release factor 1 (359 aa).

Residue Q233 is modified to N5-methylglutamine.

It belongs to the prokaryotic/mitochondrial release factor family. In terms of processing, methylated by PrmC. Methylation increases the termination efficiency of RF1.

It localises to the cytoplasm. Peptide chain release factor 1 directs the termination of translation in response to the peptide chain termination codons UAG and UAA. The sequence is that of Peptide chain release factor 1 from Ruminiclostridium cellulolyticum (strain ATCC 35319 / DSM 5812 / JCM 6584 / H10) (Clostridium cellulolyticum).